The chain runs to 393 residues: Methylthioribose kinase (393 aa).

ATP is bound by residues Asn-38, Lys-53, and 107–109; that span reads EDL. Asp-225 contributes to the substrate binding site. 242–244 provides a ligand contact to ATP; sequence DPE. Arg-332 contacts substrate.

Belongs to the methylthioribose kinase family. In terms of assembly, homodimer.

It catalyses the reaction 5-(methylsulfanyl)-D-ribose + ATP = 5-(methylsulfanyl)-alpha-D-ribose 1-phosphate + ADP + H(+). The protein operates within amino-acid biosynthesis; L-methionine biosynthesis via salvage pathway; S-methyl-5-thio-alpha-D-ribose 1-phosphate from S-methyl-5'-thioadenosine (hydrolase route): step 2/2. Catalyzes the phosphorylation of methylthioribose into methylthioribose-1-phosphate. In Bacillus cereus (strain G9842), this protein is Methylthioribose kinase.